A 493-amino-acid chain; its full sequence is 6-phosphogluconate dehydrogenase, decarboxylating (493 aa).

NADP(+)-binding positions include Gly12 to Gly17, Asn35 to Thr37, Val77 to Ala79, and Asn105. Residues Asn105 and Ser131–Gly133 each bind substrate. The Proton acceptor role is filled by Lys187. Substrate is bound at residue His190 to Asn191. The active-site Proton donor is Glu194. Positions 195, 266, 293, 456, and 462 each coordinate substrate.

This sequence belongs to the 6-phosphogluconate dehydrogenase family. Homodimer.

It catalyses the reaction 6-phospho-D-gluconate + NADP(+) = D-ribulose 5-phosphate + CO2 + NADPH. Its pathway is carbohydrate degradation; pentose phosphate pathway; D-ribulose 5-phosphate from D-glucose 6-phosphate (oxidative stage): step 3/3. Functionally, catalyzes the oxidative decarboxylation of 6-phosphogluconate to ribulose 5-phosphate and CO(2), with concomitant reduction of NADP to NADPH. This is 6-phosphogluconate dehydrogenase, decarboxylating (gnd) from Dictyostelium discoideum (Social amoeba).